The chain runs to 552 residues: MERFLRKYNISGDYANATRTFLAISPQWTCSHLKRNCLFNGMCVKQHFERAMIAATDAEEPAKAYKLVELAKEAMYDRETVWLQCFKSFSQPYEEDVEGKMKRCGAQLLEDYRKSGMMNEAVKQSALVNSERIRLDDSLSAMPYIYVPINDGQIVNPTFISRYRQIAYYFYNPDAADDWIDPNLFGIRGQHNQIKREVERQINTCPYTGYRGRVFQVMFLPIQLINFLRMDDFAKHFNRYASMAIQQYLRVGYAEEIRYVQQLFGRVPTGEFPLHQMMLMRRDLPTRDRSIVEARVRRSGDENWQSWLLPMIIIREGLDHQDRWEWFIDYMDRKHTCQLCYLKHSKQIPACSVIDVRASELTGCSPFKMVKIEEHVGNDSVFKTKLVRDEQIGRIGDHYYTTNCYTGAEALITTAIHIHRWIRGSGIWNDEGWQEGIFMLGRVLLRWELTKAQRSALLRLFCFVCYGYAPRADGTIPDWNNLGNFLDIILKGPELSEDEDERAYATMFEMVRCIITLCYAEKVHFAGFAAPACEGGEVINLAARMSQMWMEY.

It belongs to the orbivirus non-structural protein NS1 family.

In Antilocapra americana (Pronghorn), this protein is Non-structural protein NS1 (Segment-5).